Reading from the N-terminus, the 1026-residue chain is Multidrug resistance protein MdtC (1026 aa).

Helical transmembrane passes span 12 to 32 (VATTLLTLAIAISGVISFSLL), 333 to 353 (EVEQSLVIAIGLVILVVFIFL), 360 to 380 (LIPAVAVPVSLIGSFTAMYLC), 387 to 407 (LSLMALTIATGFVVDDAIVVL), 431 to 451 (VGFTVLSMSVSLVAVFIPLLL), 463 to 483 (FAVTLSVSIGLSLIISLTLTP), 528 to 548 (WVLAVFLATIALNVWLYVSIP), 853 to 873 (LLLIAAAIATVYIVLGILYES), 897 to 917 (LFGAPFSLIALIGIMLLIGIV), 953 to 973 (PIMMTTLAALFGALPLVLTHG), and 984 to 1004 (ITIVGGLIVSQLLTLYTTPVV).

Belongs to the resistance-nodulation-cell division (RND) (TC 2.A.6) family. MdtC subfamily. As to quaternary structure, part of a tripartite efflux system composed of MdtA, MdtB and MdtC. MdtC forms a heteromultimer with MdtB.

Its subcellular location is the cell inner membrane. The chain is Multidrug resistance protein MdtC from Serratia proteamaculans (strain 568).